The primary structure comprises 299 residues: Probable lipid kinase YegS (299 aa).

The 132-residue stretch at 2-133 (ANFPDSLLIL…IDMARVNDKT (132 aa)) folds into the DAGKc domain. Residues Thr40, 66-72 (GDGTINE), and Thr95 each bind ATP. Leu215, Asp218, and Leu220 together coordinate Mg(2+). The Proton acceptor role is filled by Glu271.

The protein belongs to the diacylglycerol/lipid kinase family. YegS lipid kinase subfamily. Mg(2+) serves as cofactor. Ca(2+) is required as a cofactor.

It is found in the cytoplasm. In terms of biological role, probably phosphorylates lipids; the in vivo substrate is unknown. In Salmonella arizonae (strain ATCC BAA-731 / CDC346-86 / RSK2980), this protein is Probable lipid kinase YegS.